A 368-amino-acid polypeptide reads, in one-letter code: Probable leucine aminopeptidase TRV_05750 (368 aa).

A signal peptide spans 1–18; sequence MKVFAIAAVAALTAVAVA. Residue asparagine 92 is glycosylated (N-linked (GlcNAc...) asparagine). The Zn(2+) site is built by histidine 172 and aspartate 191. N-linked (GlcNAc...) asparagine glycans are attached at residues asparagine 192 and asparagine 216. The Zn(2+) site is built by glutamate 230 and aspartate 257. Cysteine 301 and cysteine 305 form a disulfide bridge. Residue histidine 334 coordinates Zn(2+).

Belongs to the peptidase M28 family. M28E subfamily. In terms of assembly, monomer. Zn(2+) is required as a cofactor.

Its subcellular location is the secreted. Its function is as follows. Probable extracellular aminopeptidase which contributes to pathogenicity. The protein is Probable leucine aminopeptidase TRV_05750 of Trichophyton verrucosum (strain HKI 0517).